The sequence spans 688 residues: MRDPAFPGAAMAYHPFHAPRAADFPMSAFLAAAQPSFFPALTLPPAALGKPLSDASLAGAAEAGLHLSALGHHHQAAHLRSLKSLEPEEEVEDDPKVNLEAKELWDQFHKIGTEMVITKSGRRMFPPFKVRVSGLDKKAKYILLMDIVAADDCRYKFHNSRWMVAGKADPEMPKRMYIHPDSPATGEQWMAKPVAFHKLKLTNNISDKHGFTILNSMHKYQPRFHIVRANDILKLPYSTFRTYVFPETDFIAVTAYQNDKITQLKIDNNPFAKGFRDTGNGRREKRKQLSLPSLRMYEEQCKADRDGAESDASSCDPAPGRDSLHSPLSAEPSPLRLHRNNREEKFGADSDQELDRREIRSARSHSPVGHRSPPSSPRLEDRGKDKSTPEKKSDSPESRKDGSDSLFSSIRSLEKDKAESRRKEDSKSDPECGSLSKETFAPLMVQTDSPPHLSASHLQSLALSGLHGQQFFNPLNAGQPLFIHPGQFTMGPGAFSAMGMGHLLASMTGAGALDNGSLSSVQGATGAANPFPFHFSQHMLASQGIPMPAFGGLFPYPYTYMAAAAAAASAMPATSAATTMPRNPFLSSTRPRLRFNPYQIPVGIPPSTNLLTTGLPGSLNPGSESSKPGSSRESSPIPDTPVPKRSHSNSLSPKASMKDSINELQNIQRLVSGLESQREISPGRETPK.

A DNA-binding region (T-box) is located at residues 104–277; that stretch reads LWDQFHKIGT…NNPFAKGFRD (174 aa). Disordered regions lie at residues 301 to 436 and 606 to 688; these read CKAD…GSLS and PSTN…ETPK. Basic and acidic residues-rich tracts occupy residues 340 to 361, 378 to 403, and 412 to 430; these read NNRE…EIRS, RLED…KDGS, and SLEK…KSDP. The span at 621 to 636 shows a compositional bias: low complexity; sequence PGSESSKPGSSRESSP. A coiled-coil region spans residues 655 to 679; that stretch reads ASMKDSINELQNIQRLVSGLESQRE. Positions 676-688 are enriched in basic and acidic residues; the sequence is SQREISPGRETPK.

As to quaternary structure, binds DNA as a monomer.

It localises to the nucleus. Its function is as follows. Transcription factor which acts as a transcriptional repressor. May also function as a transcriptional activator. Binds to the palindromic T site 5'-TTCACACCTAGGTGTGAA-3' DNA sequence, or a half-site, which are present in the regulatory region of several genes. This Xenopus laevis (African clawed frog) protein is T-box transcription factor TBX2-A (tbx2-a).